A 184-amino-acid polypeptide reads, in one-letter code: Ribosome-recycling factor (184 aa).

Residues 133–153 (DSNDELKKQQKNSDITEDDLR) form a disordered region.

Belongs to the RRF family.

It localises to the cytoplasm. Its function is as follows. Responsible for the release of ribosomes from messenger RNA at the termination of protein biosynthesis. May increase the efficiency of translation by recycling ribosomes from one round of translation to another. The chain is Ribosome-recycling factor from Staphylococcus saprophyticus subsp. saprophyticus (strain ATCC 15305 / DSM 20229 / NCIMB 8711 / NCTC 7292 / S-41).